Consider the following 150-residue polypeptide: Flagellar assembly factor FliW (150 aa).

This sequence belongs to the FliW family. In terms of assembly, interacts with translational regulator CsrA and flagellin(s).

The protein resides in the cytoplasm. Functionally, acts as an anti-CsrA protein, binds CsrA and prevents it from repressing translation of its target genes, one of which is flagellin. Binds to flagellin and participates in the assembly of the flagellum. This is Flagellar assembly factor FliW from Leptospira interrogans serogroup Icterohaemorrhagiae serovar Lai (strain 56601).